The primary structure comprises 334 residues: GTP 3',8-cyclase (334 aa).

Residues 11–236 enclose the Radical SAM core domain; sequence GFNRKIDYLR…ESTESSMGPA (226 aa). Residue Arg20 participates in GTP binding. Residues Cys27 and Cys31 each coordinate [4Fe-4S] cluster. Tyr33 lines the S-adenosyl-L-methionine pocket. Cys34 lines the [4Fe-4S] cluster pocket. GTP is bound at residue Arg69. Gly73 is an S-adenosyl-L-methionine binding site. Residue Thr100 participates in GTP binding. Ser124 is a binding site for S-adenosyl-L-methionine. Lys161 lines the GTP pocket. Met195 is a binding site for S-adenosyl-L-methionine. Residues Cys260 and Cys263 each contribute to the [4Fe-4S] cluster site. 265–267 contacts GTP; that stretch reads RVR. Cys277 serves as a coordination point for [4Fe-4S] cluster.

The protein belongs to the radical SAM superfamily. MoaA family. Monomer and homodimer. Requires [4Fe-4S] cluster as cofactor.

It carries out the reaction GTP + AH2 + S-adenosyl-L-methionine = (8S)-3',8-cyclo-7,8-dihydroguanosine 5'-triphosphate + 5'-deoxyadenosine + L-methionine + A + H(+). The protein operates within cofactor biosynthesis; molybdopterin biosynthesis. Catalyzes the cyclization of GTP to (8S)-3',8-cyclo-7,8-dihydroguanosine 5'-triphosphate. This is GTP 3',8-cyclase from Pseudomonas putida (strain ATCC 47054 / DSM 6125 / CFBP 8728 / NCIMB 11950 / KT2440).